Here is a 1018-residue protein sequence, read N- to C-terminus: UPF0182 protein Francci3_3781 (1018 aa).

7 helical membrane passes run 13 to 33 (TKVL…IAIF), 60 to 80 (ILLF…NIVL), 109 to 129 (MLLI…LSAA), 167 to 187 (FLLG…LLTH), 208 to 228 (AHIS…YYLD), 250 to 270 (AVLP…VLFI), and 283 to 303 (LGAG…PAIV). Low complexity-rich tracts occupy residues 886–896 (TTDAGQDGTPA) and 960–980 (SSPA…SVPA). 2 disordered regions span residues 886–920 (TTDA…AVGD) and 960–1018 (SSPA…PAPG). A compositionally biased stretch (pro residues) spans 981-995 (SPVPASPAAKPPAPS).

This sequence belongs to the UPF0182 family.

Its subcellular location is the cell membrane. The sequence is that of UPF0182 protein Francci3_3781 from Frankia casuarinae (strain DSM 45818 / CECT 9043 / HFP020203 / CcI3).